Here is a 691-residue protein sequence, read N- to C-terminus: Elongation factor G (691 aa).

Positions E8–V282 constitute a tr-type G domain. GTP-binding positions include A17–T24, D81–H85, and N135–D138.

This sequence belongs to the TRAFAC class translation factor GTPase superfamily. Classic translation factor GTPase family. EF-G/EF-2 subfamily.

The protein localises to the cytoplasm. Its function is as follows. Catalyzes the GTP-dependent ribosomal translocation step during translation elongation. During this step, the ribosome changes from the pre-translocational (PRE) to the post-translocational (POST) state as the newly formed A-site-bound peptidyl-tRNA and P-site-bound deacylated tRNA move to the P and E sites, respectively. Catalyzes the coordinated movement of the two tRNA molecules, the mRNA and conformational changes in the ribosome. The chain is Elongation factor G from Prochlorococcus marinus (strain NATL2A).